The following is a 147-amino-acid chain: Hemoglobin subunit beta (147 aa).

Positions 2–147 constitute a Globin domain; the sequence is HWEDAEKQYI…ISHSLGREYH (146 aa). Residues His63 and His92 each contribute to the heme b site.

The protein belongs to the globin family. As to quaternary structure, heterotetramer of two alpha chains and two beta chains. Red blood cells.

Involved in oxygen transport from the lung to the various peripheral tissues. In Lepidosiren paradoxus (South American lungfish), this protein is Hemoglobin subunit beta (HBB).